A 102-amino-acid polypeptide reads, in one-letter code: MKRMIRSHGRKTECQMTGAGERRGSAVGALICGSGTRRGSGANERRDSDVGPIAHSSGTRRGSANETSACTRTDHQKADIGLWFMFLVFGLCSWLAMRYRAQ.

Disordered stretches follow at residues 1–21 (MKRM…GAGE) and 33–71 (GSGT…SACT). At 1 to 79 (MKRMIRSHGR…CTRTDHQKAD (79 aa)) the chain is on the extracellular side. Positions 56–71 (SSGTRRGSANETSACT) are enriched in polar residues. N65 is a glycosylation site (N-linked (GlcNAc...) asparagine; by host). A helical membrane pass occupies residues 80 to 97 (IGLWFMFLVFGLCSWLAM). Topologically, residues 98 to 102 (RYRAQ) are cytoplasmic.

It belongs to the HHV-5 UL15A protein family.

The protein resides in the host membrane. This is an uncharacterized protein from Human cytomegalovirus (strain Merlin) (HHV-5).